The sequence spans 110 residues: Small ubiquitin-related modifier 3 (110 aa).

Residues Lys-5 and Lys-7 each participate in a glycyl lysine isopeptide (Lys-Gly) (interchain with G-Cter in SUMO2) cross-link. Lys-11 participates in a covalent cross-link: Glycyl lysine isopeptide (Lys-Gly) (interchain with G-Cter in SUMO); alternate. Lys-11 participates in a covalent cross-link: Glycyl lysine isopeptide (Lys-Gly) (interchain with G-Cter in SUMO2); alternate. The region spanning 15–92 (DHINLKVAGQ…IDVFQQQTGG (78 aa)) is the Ubiquitin-like domain. Residues 88–101 (QQTGGSASRGSVPT) show a composition bias toward polar residues. The tract at residues 88–110 (QQTGGSASRGSVPTPNRCPDLCY) is disordered. Gly-92 participates in a covalent cross-link: Glycyl lysine isopeptide (Gly-Lys) (interchain with K-? in acceptor proteins). Positions 93 to 110 (SASRGSVPTPNRCPDLCY) are excised as a propeptide.

Belongs to the ubiquitin family. SUMO subfamily. As to quaternary structure, interacts with SAE2 and UBE2I. Covalently attached to a number of proteins. Interacts with USP25 (via ts SIM domain); the interaction sumoylates USP25 and inhibits its ubiquitin hydrolyzing activity. Interacts with BMAL1. In terms of processing, polymeric chains can be formed through Lys-11 cross-linking. Cleavage of precursor form by SENP1, SENP2 or SENP5 is necessary for function.

It localises to the cytoplasm. The protein localises to the nucleus. Its subcellular location is the PML body. Ubiquitin-like protein which can be covalently attached to target lysines either as a monomer or as a lysine-linked polymer. Does not seem to be involved in protein degradation and may function as an antagonist of ubiquitin in the degradation process. Plays a role in a number of cellular processes such as nuclear transport, DNA replication and repair, mitosis and signal transduction. Covalent attachment to its substrates requires prior activation by the E1 complex SAE1-SAE2 and linkage to the E2 enzyme UBE2I, and can be promoted by an E3 ligase such as PIAS1-4, RANBP2 or CBX4. Plays a role in the regulation of sumoylation status of SETX. This chain is Small ubiquitin-related modifier 3, found in Mus musculus (Mouse).